Here is a 383-residue protein sequence, read N- to C-terminus: MSSRPLTIGLVAGETSGDILGAGLIRSLKEKVPDARFVGVAGPRMQAEGCEAWYEMEELAVMGIVEVLGRLPRLLKIRRDLTQRFSELQPDVFVGIDAPDFNITLEGNLKQRGINTIHYVSPSVWAWRQKRVFKIGKATNLVLAFLPFEKAFYDRFNVPCRFIGHTMADAMPLHPDKQAARATLGIAPEAHCLALLPGSRNAEVEMLSADFLKTAVLLREHFPDLEIVVPLVNSKRREQFEQIKSSVAPDLRVHLLDGQAREAMIASDAALLASGTAALECMLAKCPMVVGYRMKPFTFWLAQRLVKTQWVSLPNLLAGRELVTELLQTDCTPDKLAAALLPLFADSDKTAALRTTFVDLHQQIRCNADEQAAQAVLELVKPR.

This sequence belongs to the LpxB family.

It carries out the reaction 2-N,3-O-bis[(3R)-3-hydroxytetradecanoyl]-alpha-D-glucosaminyl 1-phosphate + UDP-2-N,3-O-bis[(3R)-3-hydroxytetradecanoyl]-alpha-D-glucosamine = lipid A disaccharide (E. coli) + UDP + H(+). It catalyses the reaction a lipid X + a UDP-2-N,3-O-bis[(3R)-3-hydroxyacyl]-alpha-D-glucosamine = a lipid A disaccharide + UDP + H(+). It participates in glycolipid biosynthesis; lipid IV(A) biosynthesis; lipid IV(A) from (3R)-3-hydroxytetradecanoyl-[acyl-carrier-protein] and UDP-N-acetyl-alpha-D-glucosamine: step 5/6. In terms of biological role, condensation of UDP-2,3-diacylglucosamine and 2,3-diacylglucosamine-1-phosphate to form lipid A disaccharide, a precursor of lipid A, a phosphorylated glycolipid that anchors the lipopolysaccharide to the outer membrane of the cell. This Pectobacterium carotovorum subsp. carotovorum (strain PC1) protein is Lipid-A-disaccharide synthase.